The chain runs to 306 residues: Acetaldehyde dehydrogenase 2/3 (306 aa).

C130 (acyl-thioester intermediate) is an active-site residue. NAD(+) is bound by residues 161 to 169 (SAGPGTRKN) and N272.

It belongs to the acetaldehyde dehydrogenase family.

The enzyme catalyses acetaldehyde + NAD(+) + CoA = acetyl-CoA + NADH + H(+). This chain is Acetaldehyde dehydrogenase 2/3 (mhpF), found in Azoarcus sp. (strain BH72).